A 421-amino-acid chain; its full sequence is Tyrosine--tRNA ligase (421 aa).

Tyr-38 is an L-tyrosine binding site. The 'HIGH' region signature appears at 43–52 (PTGDSLHIGH). Residues Tyr-169 and Gln-173 each coordinate L-tyrosine. A 'KMSKS' region motif is present at residues 231-235 (KFGKS). Lys-234 contacts ATP. Residues 353 to 419 (KNLVDFLVDT…GKKKYTLVHI (67 aa)) enclose the S4 RNA-binding domain.

The protein belongs to the class-I aminoacyl-tRNA synthetase family. TyrS type 1 subfamily. As to quaternary structure, homodimer.

It localises to the cytoplasm. It carries out the reaction tRNA(Tyr) + L-tyrosine + ATP = L-tyrosyl-tRNA(Tyr) + AMP + diphosphate + H(+). Functionally, catalyzes the attachment of tyrosine to tRNA(Tyr) in a two-step reaction: tyrosine is first activated by ATP to form Tyr-AMP and then transferred to the acceptor end of tRNA(Tyr). In Lactobacillus delbrueckii subsp. bulgaricus (strain ATCC BAA-365 / Lb-18), this protein is Tyrosine--tRNA ligase.